Consider the following 238-residue polypeptide: tRNA (guanine-N(7)-)-methyltransferase (238 aa).

S-adenosyl-L-methionine contacts are provided by glutamate 68, glutamate 93, aspartate 120, and aspartate 143. Aspartate 143 is a catalytic residue. Residues lysine 147, aspartate 179, and 216–219 (TKFE) contribute to the substrate site.

This sequence belongs to the class I-like SAM-binding methyltransferase superfamily. TrmB family.

The enzyme catalyses guanosine(46) in tRNA + S-adenosyl-L-methionine = N(7)-methylguanosine(46) in tRNA + S-adenosyl-L-homocysteine. It functions in the pathway tRNA modification; N(7)-methylguanine-tRNA biosynthesis. Catalyzes the formation of N(7)-methylguanine at position 46 (m7G46) in tRNA. The polypeptide is tRNA (guanine-N(7)-)-methyltransferase (Shewanella oneidensis (strain ATCC 700550 / JCM 31522 / CIP 106686 / LMG 19005 / NCIMB 14063 / MR-1)).